Here is a 102-residue protein sequence, read N- to C-terminus: Large ribosomal subunit protein bL21 (102 aa).

The protein belongs to the bacterial ribosomal protein bL21 family. In terms of assembly, part of the 50S ribosomal subunit. Contacts protein L20.

Its function is as follows. This protein binds to 23S rRNA in the presence of protein L20. The sequence is that of Large ribosomal subunit protein bL21 from Latilactobacillus sakei subsp. sakei (strain 23K) (Lactobacillus sakei subsp. sakei).